A 528-amino-acid chain; its full sequence is Cytochrome P450 monooxygenase lenC (528 aa).

A helical membrane pass occupies residues 5–27; it reads FVLPHPASMGASCILGLLLLTIL. Cysteine 469 is a binding site for heme.

This sequence belongs to the cytochrome P450 family. Requires heme as cofactor.

It is found in the membrane. It functions in the pathway alkaloid biosynthesis. Nonribosomal peptide synthetase; part of the gene cluster that mediates the biosynthesis of the ergot alkaloids lentopeptins A and B. Within the pathway, lenC catalyzes the post-NRPS oxidative modification steps using as substrate the N-acyldiketopiperazine intermediate produced by the NRPS lenA. Lentopeptin A forms via a stereospecific hydroxylation, followed by a spontaneous bicyclic lactam core formation, while lentopeptin B is produced through an initial dehydrogenation, followed by a bicyclic lactam core formation and stereospecific hydration. The phenylalanine ammonia-lyase lenB provides the cinnamic acid starter unit to the NRPS lenA for the synthesis of the N-acyldiketopiperazine intermediate which in turn is converted into lentopeptins A and B by lenC. The protein is Cytochrome P450 monooxygenase lenC of Aspergillus lentulus.